A 905-amino-acid chain; its full sequence is Cadherin-2B (905 aa).

The signal sequence occupies residues 1–28; sequence MCRKQPFLLPTLLGILAALMLQQGPVEA. Positions 29–160 are excised as a propeptide; the sequence is FGGSRLCKTG…NSNGLQRQKR (132 aa). Cadherin domains lie at 161–268, 269–383, 384–498, 499–604, and 605–713; these read DWVI…RPEF, LHQI…PPEF, TAMT…NPYF, TPNP…DNAP, and YVYP…TTAP. The Extracellular portion of the chain corresponds to 161-723; it reads DWVIPPINVP…IIGTGLGTGA (563 aa). A Ca(2+)-binding site is contributed by E171. An N-linked (GlcNAc...) asparagine glycan is attached at N191. 7 residues coordinate Ca(2+): D227, E229, D260, M261, N262, D263, and N264. N-linked (GlcNAc...) asparagine glycosylation occurs at N274. 3 residues coordinate Ca(2+): D294, D296, and N302. An N-linked (GlcNAc...) asparagine glycan is attached at N326. D354 provides a ligand contact to Ca(2+). N-linked (GlcNAc...) asparagine glycosylation is found at N403, N573, N623, N651, and N692. The helical transmembrane segment at 724–745 threads the bilayer; sequence IIAILLCIIILLTLVLMFVVWM. Topologically, residues 746 to 905 are cytoplasmic; that stretch reads KRRDKERQAK…LADMYGGSDD (160 aa). Disordered stretches follow at residues 774–800 and 862–883; these read EEGG…PDTI and SGST…EQDY. Positions 775–784 are enriched in acidic residues; sequence EGGGEEDQDY. Residues 862-879 are compositionally biased toward low complexity; sequence SGSTAGSLSSLNSSSSGG.

As to quaternary structure, homodimer (via extracellular region). Can also form heterodimers with other cadherins (via extracellular region). Dimerization occurs in trans, i.e. with a cadherin chain from another cell.

It localises to the cell membrane. The protein localises to the sarcolemma. It is found in the cell junction. The protein resides in the cell surface. Its subcellular location is the desmosome. It localises to the adherens junction. Functionally, calcium-dependent cell adhesion protein; preferentially mediates homotypic cell-cell adhesion. Cadherins may thus contribute to the sorting of heterogeneous cell types, and thereby play an important role during embryonic development. Required for proper neurite branching. Required for pre- and postsynaptic organization. The protein is Cadherin-2B (cdh2-b) of Xenopus laevis (African clawed frog).